The chain runs to 2180 residues: Genome polyprotein (2180 aa).

Disordered regions lie at residues 507 to 529, 624 to 679, 703 to 809, and 822 to 848; these read DGAD…AKDP, QPQK…YPIQ, KRAK…NTLP, and SEVE…PPKM. Residues 573–624 adopt a coiled-coil conformation; it reads SKNQGLIRVLEQQLQDLNKRICPPGTSLFHFFDQQKSEMASLKEQIRLLKEQ. 2 stretches are compositionally biased toward polar residues: residues 631-643 and 670-679; these read DTPS…QPFH and PSLFSQYPIQ. A compositionally biased stretch (basic and acidic residues) spans 703-716; that stretch reads KRAKKKLQKDEVKQ. Polar residues predominate over residues 759–771; the sequence is SEDTSSQSYISTE. Low complexity predominate over residues 784–807; that stretch reads SEESTQLSQLSSSSNDSPENNENT. Over residues 822-832 the composition is skewed to acidic residues; the sequence is SEVEDEVDGMT. Residues 1113 to 1126 form a CCHC-type zinc finger; sequence CFTCGKIGHFSRNC. The For protease activity; shared with dimeric partner role is filled by Asp-1227. Asp-1480, Asp-1543, and Asp-1544 together coordinate Mg(2+). Disordered regions lie at residues 1824 to 1848, 2115 to 2145, and 2161 to 2180; these read RRTR…YKLS, NIVK…KNKC, and YSTK…EPCI. Over residues 1828–1847 the composition is skewed to polar residues; sequence SNSTKSKADSSQSTGSSYKL. Over residues 2120-2145 the composition is skewed to basic residues; sequence SPRKRKGKAKSKSSTRNEKRRAKNKC. Positions 2163–2180 are enriched in polar residues; that stretch reads TKPSTPSWTQDSSSEPCI.

It belongs to the Petuviruses genome polyprotein family.

It catalyses the reaction DNA(n) + a 2'-deoxyribonucleoside 5'-triphosphate = DNA(n+1) + diphosphate. Its function is as follows. Encodes presumably for at least four polypeptides: Movement protein (MP), capsid protein (CP), Protease (PR), and reverse transcriptase (RT). The protein is Genome polyprotein of Petunia (PVCV).